Consider the following 181-residue polypeptide: ATP-dependent protease subunit HslV (181 aa).

T2 is a catalytic residue. Residues G157, C160, and T163 each coordinate Na(+).

This sequence belongs to the peptidase T1B family. HslV subfamily. As to quaternary structure, a double ring-shaped homohexamer of HslV is capped on each side by a ring-shaped HslU homohexamer. The assembly of the HslU/HslV complex is dependent on binding of ATP.

It localises to the cytoplasm. It catalyses the reaction ATP-dependent cleavage of peptide bonds with broad specificity.. Its activity is regulated as follows. Allosterically activated by HslU binding. Protease subunit of a proteasome-like degradation complex believed to be a general protein degrading machinery. This is ATP-dependent protease subunit HslV from Hahella chejuensis (strain KCTC 2396).